The chain runs to 361 residues: 45 kDa calcium-binding protein (361 aa).

The N-terminal stretch at 1 to 35 (MVWLVAMTPRQSSLCGLAAHGLWFLGLVLLMDATA) is a signal peptide. Residue Asn-39 is glycosylated (N-linked (GlcNAc...) asparagine). EF-hand domains are found at residues 97–132 (RSRRKLMVIFSKVDVNTDRRISAKEMQHWIMEKTAE) and 136–171 (EAVKENKLHFRAVDPDGDGHVSWDEYKVKFLASKGH). Ser-98 carries the post-translational modification Phosphoserine. Asp-110, Asn-112, Asp-114, Arg-116, Glu-121, Asp-149, Asp-151, Asp-153, His-155, and Glu-160 together coordinate Ca(2+). Thr-192 carries the phosphothreonine modification. 4 consecutive EF-hand domains span residues 196–231 (LGNLRDRWYQADNPPADLLLTEDEFLSFLHPEHSRG), 232–267 (MLKFMVKEIFRDLDQDGDKQLSLPEFISLPVGTVEN), 277–312 (WVKDRKKEFEELIDSNHDGIVTMEELENYMDPMNEY), and 313–348 (NALNEAKQMIAIADENQNHHLEPEEILKYSEFFTGS). Residue Asp-212 participates in Ca(2+) binding. Thr-216 is modified (phosphothreonine). Ca(2+) is bound by residues Glu-219, Asp-245, Asp-247, Asp-249, Gln-251, and Glu-256. Phosphothreonine is present on Thr-264. 3 residues coordinate Ca(2+): Asp-290, Asn-292, and Asp-294. Thr-298 bears the Phosphothreonine mark. Positions 301, 326, 328, 330, 332, and 337 each coordinate Ca(2+). The interval 308 to 361 (PMNEYNALNEAKQMIAIADENQNHHLEPEEILKYSEFFTGSKLMDYARNVHEEF) is necessary for intracellular retention in Golgi apparatus lumen.

The protein belongs to the CREC family. As to expression, ubiquitous.

It localises to the golgi apparatus lumen. Functionally, may regulate calcium-dependent activities in the endoplasmic reticulum lumen or post-ER compartment. In Mus musculus (Mouse), this protein is 45 kDa calcium-binding protein (Sdf4).